The chain runs to 160 residues: 6,7-dimethyl-8-ribityllumazine synthase (160 aa).

5-amino-6-(D-ribitylamino)uracil is bound by residues W27, A59–E61, and V81–I83. Q86 to T87 lines the (2S)-2-hydroxy-3-oxobutyl phosphate pocket. Catalysis depends on H89, which acts as the Proton donor. 5-amino-6-(D-ribitylamino)uracil is bound at residue N114. R128 serves as a coordination point for (2S)-2-hydroxy-3-oxobutyl phosphate.

The protein belongs to the DMRL synthase family. As to quaternary structure, homopentamer.

The catalysed reaction is (2S)-2-hydroxy-3-oxobutyl phosphate + 5-amino-6-(D-ribitylamino)uracil = 6,7-dimethyl-8-(1-D-ribityl)lumazine + phosphate + 2 H2O + H(+). The protein operates within cofactor biosynthesis; riboflavin biosynthesis; riboflavin from 2-hydroxy-3-oxobutyl phosphate and 5-amino-6-(D-ribitylamino)uracil: step 1/2. Catalyzes the formation of 6,7-dimethyl-8-ribityllumazine by condensation of 5-amino-6-(D-ribitylamino)uracil with 3,4-dihydroxy-2-butanone 4-phosphate. This is the penultimate step in the biosynthesis of riboflavin. The protein is 6,7-dimethyl-8-ribityllumazine synthase of Mycobacterium avium (strain 104).